We begin with the raw amino-acid sequence, 397 residues long: uncharacterized protein (397 aa).

4 helical membrane passes run 62-79 (VLLF…LIAI), 92-109 (WYGL…LVVT), 135-154 (VVFL…STLS), and 167-189 (AFLK…FPGI).

It is found in the cell membrane. This is an uncharacterized protein from Archaeoglobus fulgidus (strain ATCC 49558 / DSM 4304 / JCM 9628 / NBRC 100126 / VC-16).